A 270-amino-acid chain; its full sequence is UBX domain-containing protein 8 (270 aa).

Residue Met-1 is a topological domain, cytoplasmic. The chain crosses the membrane as a helical span at residues 2-22 (ASRGVVGIFFLSAVPLVCLEL). Residues 23–33 (RRGIPDIGIKD) are Lumenal-facing. Residues 34 to 54 (FLLLCGRILLLLALLTLIISV) traverse the membrane as a helical segment. The Cytoplasmic segment spans residues 55–270 (TTSWLNSFKS…LILEEKEQTN (216 aa)). The disordered stretch occupies residues 130-171 (SGHKLGGDEGTSQTSFETSNREAAKSQNLPKPLTEFPSPAEQ). Ser-167 is modified (phosphoserine). Residues 187-263 (TAEEVVTVAL…GITVDTVLIL (77 aa)) enclose the UBX domain.

Interacts with SYVN1 and VCP. As to expression, expressed abundantly in ovary and testis, and weakly in all other tissues tested.

Its subcellular location is the endoplasmic reticulum membrane. Functionally, involved in endoplasmic reticulum-associated degradation (ERAD) for misfolded lumenal proteins, possibly by tethering VCP to the endoplasmic reticulum membrane. May play a role in reproduction. In Homo sapiens (Human), this protein is UBX domain-containing protein 8 (UBXN8).